Reading from the N-terminus, the 306-residue chain is Methionyl-tRNA formyltransferase (306 aa).

A (6S)-5,6,7,8-tetrahydrofolate-binding site is contributed by Ser-108–Pro-111.

Belongs to the Fmt family.

It catalyses the reaction L-methionyl-tRNA(fMet) + (6R)-10-formyltetrahydrofolate = N-formyl-L-methionyl-tRNA(fMet) + (6S)-5,6,7,8-tetrahydrofolate + H(+). In terms of biological role, attaches a formyl group to the free amino group of methionyl-tRNA(fMet). The formyl group appears to play a dual role in the initiator identity of N-formylmethionyl-tRNA by promoting its recognition by IF2 and preventing the misappropriation of this tRNA by the elongation apparatus. The polypeptide is Methionyl-tRNA formyltransferase (Pseudarthrobacter chlorophenolicus (strain ATCC 700700 / DSM 12829 / CIP 107037 / JCM 12360 / KCTC 9906 / NCIMB 13794 / A6) (Arthrobacter chlorophenolicus)).